Reading from the N-terminus, the 350-residue chain is DNA repair protein rhp55 (350 aa).

Glycine 51–threonine 58 serves as a coordination point for ATP. The disordered stretch occupies residues glutamine 331–serine 350.

It belongs to the RecA family. RAD55 subfamily.

The protein resides in the nucleus. Required for radiation resistance and meiotic viability and acts in recombination and recombinational DNA repair pathways. The sequence is that of DNA repair protein rhp55 (rhp55) from Schizosaccharomyces pombe (strain 972 / ATCC 24843) (Fission yeast).